Consider the following 373-residue polypeptide: MPVVRVLRRVACWMLQSPACGCRAPVLPSRFLGTSPRQIPMDANFHSTSFSEADQQRVLITGGLGQLGVGLASFLRKRFGKDNVILSDIRKPPEHVFLSGPFIYSDILDYKNLREIVVNNRITWLFHYSALLSAVGEANVSLARAVNITGLHNVLDVAAEHGLRLFVPSTIGAFGPTSPRNPTPDLCIQRPRTIYGVSKVHAELMGEYYYYRYGLDFRCLRYPGIISADSQPGGGTTDYAVQIFHEAVKNGRFECNLKPDTRLPMMYIDDCLRATLEVMEAPAESLSMRTYNISAMSFTPEELAQEVLKHVPELQVTYNVDPVRQAIADSWPMNFDDSNARKDWGWKHDFDLPELVTTMLNFHGSESRVAQAN.

Residues 62–67 (GGLGQL), 88–90 (DIR), 106–107 (DI), Tyr195, Lys199, and Ile225 each bind NAD(+). Residue Tyr195 is the Proton donor/acceptor of the active site.

This sequence belongs to the NAD(P)-dependent epimerase/dehydratase family. As to quaternary structure, homodimer.

It localises to the mitochondrion. It carries out the reaction L-threonine + NAD(+) = (2S)-2-amino-3-oxobutanoate + NADH + H(+). The protein operates within amino-acid degradation; L-threonine degradation via oxydo-reductase pathway; glycine from L-threonine: step 1/2. Its function is as follows. Catalyzes the NAD(+)-dependent oxidation of L-threonine to 2-amino-3-ketobutyrate, mediating L-threonine catabolism. This chain is L-threonine 3-dehydrogenase, mitochondrial, found in Bos taurus (Bovine).